Here is a 166-residue protein sequence, read N- to C-terminus: MASTSPEPSTAAAVAETGCSVQIRRLEATDHEKGFVALLSQLSACPDLTASEFAACFADLAALGDDHVILVAEDPAAPESRILATGCLFVERKFLRGGGKVGHVEDVVVDAAARGRGLGLRVVRRLVEIAKEAGCYKVILDCTPELRAYYAKCGFVEKGVQMAIYF.

Residues 21-166 enclose the N-acetyltransferase domain; the sequence is VQIRRLEATD…EKGVQMAIYF (146 aa). Substrate is bound by residues S43, 93-96, and 105-107; these read KFLR and EDV. 115 to 120 contributes to the acetyl-CoA binding site; that stretch reads GRGLGL. Residue 136-137 participates in substrate binding; that stretch reads YK. Residue 150-152 participates in acetyl-CoA binding; the sequence is YAK.

It belongs to the acetyltransferase family. GNA1 subfamily. Homodimer.

The protein resides in the endoplasmic reticulum membrane. It catalyses the reaction D-glucosamine 6-phosphate + acetyl-CoA = N-acetyl-D-glucosamine 6-phosphate + CoA + H(+). Its pathway is nucleotide-sugar biosynthesis; UDP-N-acetyl-alpha-D-glucosamine biosynthesis; N-acetyl-alpha-D-glucosamine 1-phosphate from alpha-D-glucosamine 6-phosphate (route I): step 1/2. Functionally, acetyltransferase involved in UDP-N-acetylglucosamine (UDP-GlcNAc) biosynthesis. UDP-GlcNAc is an essential metabolite that serves as an initial sugar donor of N-glycan synthesis and thus plays an important role in protein and lipid glycosylation. In Oryza sativa subsp. japonica (Rice), this protein is Probable glucosamine 6-phosphate N-acetyltransferase 2.